The sequence spans 729 residues: Probable cyclic di-GMP phosphodiesterase PdeA (729 aa).

8 helical membrane-spanning segments follow: residues 17 to 37 (AFTL…LAII), 41 to 61 (YIFL…IFGW), 83 to 103 (FLQT…ACAI), 126 to 146 (FWLG…VGSF), 163 to 183 (IFTV…NMLF), 214 to 234 (AFTL…CTPY), 238 to 258 (FIAG…VGKL), and 289 to 309 (YSLA…LYMV). One can recognise a GGDEF domain in the interval 348 to 476 (AGKSFCCLRI…AHHHVLALDS (129 aa)). One can recognise an EAL domain in the interval 488–729 (QVLLLNTIRT…LIGRPQPLAD (242 aa)).

Its subcellular location is the cell membrane. It carries out the reaction 3',3'-c-di-GMP + H2O = 5'-phosphoguanylyl(3'-&gt;5')guanosine + H(+). In terms of biological role, phosphodiesterase (PDE) that catalyzes the hydrolysis of cyclic-di-GMP (c-di-GMP) to 5'-pGpG. In Escherichia coli (strain K12), this protein is Probable cyclic di-GMP phosphodiesterase PdeA.